An 809-amino-acid chain; its full sequence is Carbon monoxide dehydrogenase large chain (809 aa).

A Cu(+)-binding site is contributed by C388. E763 is a Mo-molybdopterin cytosine dinucleotide binding site.

Dimer of heterotrimers. Each heterotrimer consists of a large, a medium and a small subunit. The cofactor is Cu(+). Requires Mo-molybdopterin cytosine dinucleotide as cofactor.

It catalyses the reaction CO + a quinone + H2O = a quinol + CO2. Catalyzes the oxidation of carbon monoxide to carbon dioxide. This chain is Carbon monoxide dehydrogenase large chain (coxL), found in Afipia carboxidovorans (strain ATCC 49405 / DSM 1227 / KCTC 32145 / OM5) (Oligotropha carboxidovorans).